The following is a 160-amino-acid chain: Phosphopantetheine adenylyltransferase (160 aa).

Substrate is bound at residue threonine 9. ATP-binding positions include 9-10 (TF) and histidine 17. Positions 41, 73, and 87 each coordinate substrate. ATP is bound by residues 88 to 90 (GLR), glutamate 98, and 123 to 129 (YMFISAS).

It belongs to the bacterial CoaD family. Homohexamer. Mg(2+) serves as cofactor.

It is found in the cytoplasm. The enzyme catalyses (R)-4'-phosphopantetheine + ATP + H(+) = 3'-dephospho-CoA + diphosphate. It functions in the pathway cofactor biosynthesis; coenzyme A biosynthesis; CoA from (R)-pantothenate: step 4/5. Reversibly transfers an adenylyl group from ATP to 4'-phosphopantetheine, yielding dephospho-CoA (dPCoA) and pyrophosphate. This Thiobacillus denitrificans (strain ATCC 25259 / T1) protein is Phosphopantetheine adenylyltransferase.